Here is a 473-residue protein sequence, read N- to C-terminus: Probable glycine dehydrogenase (decarboxylating) subunit 2 (473 aa).

A disordered region spans residues 1–40 (MEHYEQARYAPAEGETNEPLLSENDQTTVSVDPSLPDDLT). At lysine 270 the chain carries N6-(pyridoxal phosphate)lysine.

This sequence belongs to the GcvP family. C-terminal subunit subfamily. In terms of assembly, the glycine cleavage system is composed of four proteins: P, T, L and H. In this organism, the P 'protein' is a heterodimer of two subunits. The cofactor is pyridoxal 5'-phosphate.

It catalyses the reaction N(6)-[(R)-lipoyl]-L-lysyl-[glycine-cleavage complex H protein] + glycine + H(+) = N(6)-[(R)-S(8)-aminomethyldihydrolipoyl]-L-lysyl-[glycine-cleavage complex H protein] + CO2. Functionally, the glycine cleavage system catalyzes the degradation of glycine. The P protein binds the alpha-amino group of glycine through its pyridoxal phosphate cofactor; CO(2) is released and the remaining methylamine moiety is then transferred to the lipoamide cofactor of the H protein. This is Probable glycine dehydrogenase (decarboxylating) subunit 2 from Halobacterium salinarum (strain ATCC 700922 / JCM 11081 / NRC-1) (Halobacterium halobium).